The sequence spans 602 residues: Elongation factor 4 (602 aa).

The region spanning 6 to 188 is the tr-type G domain; sequence DRIRNFCIIA…RIVRDVPPPG (183 aa). GTP contacts are provided by residues 18–23 and 135–138; these read DHGKST and NKID.

Belongs to the TRAFAC class translation factor GTPase superfamily. Classic translation factor GTPase family. LepA subfamily.

The protein resides in the cell membrane. It carries out the reaction GTP + H2O = GDP + phosphate + H(+). Its function is as follows. Required for accurate and efficient protein synthesis under certain stress conditions. May act as a fidelity factor of the translation reaction, by catalyzing a one-codon backward translocation of tRNAs on improperly translocated ribosomes. Back-translocation proceeds from a post-translocation (POST) complex to a pre-translocation (PRE) complex, thus giving elongation factor G a second chance to translocate the tRNAs correctly. Binds to ribosomes in a GTP-dependent manner. The sequence is that of Elongation factor 4 from Desulforudis audaxviator (strain MP104C).